A 1238-amino-acid chain; its full sequence is Protein MMS22-like (1238 aa).

This sequence belongs to the MMS22 family. MMS22L subfamily. In terms of assembly, component of the MMS22L-TONSL complex, a complex at least composed of MMS22L and TONSL/NFKBIL2. Interacts with RAD51; interaction is direct. In terms of processing, degraded by the ubiquitin-proteasome system upon replication stress.

It is found in the nucleus. The protein resides in the chromosome. In terms of biological role, component of the MMS22L-TONSL complex, a complex that promotes homologous recombination-mediated repair of double-strand breaks (DSBs) at stalled or collapsed replication forks. The MMS22L-TONSL complex is required to maintain genome integrity during DNA replication. It mediates the assembly of RAD51 filaments on single-stranded DNA (ssDNA): the MMS22L-TONSL complex is recruited to DSBs following histone replacement by histone chaperones and eviction of the replication protein A complex (RPA/RP-A) from DSBs. Following recruitment to DSBs, the TONSL-MMS22L complex promotes recruitment of RAD51 filaments and subsequent homologous recombination. Within the complex, MMS22L acts by binding ssDNA. In Mus musculus (Mouse), this protein is Protein MMS22-like (Mms22l).